We begin with the raw amino-acid sequence, 160 residues long: SsrA-binding protein (160 aa).

This sequence belongs to the SmpB family.

The protein localises to the cytoplasm. Functionally, required for rescue of stalled ribosomes mediated by trans-translation. Binds to transfer-messenger RNA (tmRNA), required for stable association of tmRNA with ribosomes. tmRNA and SmpB together mimic tRNA shape, replacing the anticodon stem-loop with SmpB. tmRNA is encoded by the ssrA gene; the 2 termini fold to resemble tRNA(Ala) and it encodes a 'tag peptide', a short internal open reading frame. During trans-translation Ala-aminoacylated tmRNA acts like a tRNA, entering the A-site of stalled ribosomes, displacing the stalled mRNA. The ribosome then switches to translate the ORF on the tmRNA; the nascent peptide is terminated with the 'tag peptide' encoded by the tmRNA and targeted for degradation. The ribosome is freed to recommence translation, which seems to be the essential function of trans-translation. In Marinobacter nauticus (strain ATCC 700491 / DSM 11845 / VT8) (Marinobacter aquaeolei), this protein is SsrA-binding protein.